Here is a 330-residue protein sequence, read N- to C-terminus: Phosphate acyltransferase (330 aa).

Belongs to the PlsX family. In terms of assembly, homodimer. Probably interacts with PlsY.

The protein resides in the cytoplasm. The catalysed reaction is a fatty acyl-[ACP] + phosphate = an acyl phosphate + holo-[ACP]. It functions in the pathway lipid metabolism; phospholipid metabolism. In terms of biological role, catalyzes the reversible formation of acyl-phosphate (acyl-PO(4)) from acyl-[acyl-carrier-protein] (acyl-ACP). This enzyme utilizes acyl-ACP as fatty acyl donor, but not acyl-CoA. In Streptococcus pneumoniae (strain JJA), this protein is Phosphate acyltransferase.